The chain runs to 150 residues: Ribonuclease K6 (150 aa).

The first 23 residues, 1–23 (MVLCFPLLLLLLVLWGPVCLLHA), serve as a signal peptide directing secretion. The active-site Proton acceptor is H38. 4 disulfide bridges follow: C46/C104, C60/C114, C78/C129, and C85/C92. A glycan (N-linked (GlcNAc...) asparagine) is linked at N55. Substrate contacts are provided by residues 61-65 (KHQNT) and K86. N100 is a glycosylation site (N-linked (GlcNAc...) asparagine). Residue R105 participates in substrate binding. The Proton donor role is filled by H145.

It belongs to the pancreatic ribonuclease family. Interacts (via N-terminus) with bacterial lipopolysaccharide (LPS).

The protein resides in the secreted. It localises to the lysosome. It is found in the cytoplasmic granule. Functionally, ribonuclease which shows a preference for the pyrimidines uridine and cytosine. Has potent antibacterial activity against a range of Gram-positive and Gram-negative bacteria, including P.aeruginosa, A.baumanii, M.luteus, S.aureus, E.faecalis, E.faecium, S.saprophyticus and E.coli. Causes loss of bacterial membrane integrity, and also promotes agglutination of Gram-negative bacteria. Probably contributes to urinary tract sterility. Bactericidal activity is independent of RNase activity. The protein is Ribonuclease K6 (RNASE6) of Chlorocebus aethiops (Green monkey).